The primary structure comprises 111 residues: Secreted transmembrane peptide 5 (111 aa).

The first 46 residues, 1-46, serve as a signal peptide directing secretion; that stretch reads MRLSVFYIFITRLAMTKNATKNEMGSKSPNIVALVLPLLLILYTLS. Positions 66 to 79 match the SCOOP motif motif; the sequence is IVWTPHSNSCGGSP. Residues 72–74 carry the SxS motif essential for MIK2 binding motif; that stretch reads SNS. A disordered region spans residues 89–111; the sequence is TTGRPCRRSRPPGTNIPVSDQSP.

This sequence belongs to the serine rich endogenous peptide (SCOOP) phytocytokine family. In terms of assembly, interacts with MIK2 (via extracellular leucine-rich repeat domain); this interaction triggers the formation of complex between MIK2 and the BAK1/SERK3 and SERK4 coreceptors, and subsequent BAK1 activation by phosphorylation. In terms of tissue distribution, mostly expressed in leaves, and, to a lower extent, in roots, stems, siliques, seeds and flowers.

It is found in the cell membrane. The protein localises to the secreted. The protein resides in the extracellular space. Its subcellular location is the apoplast. Functionally, brassicaceae-specific phytocytokine (plant endogenous peptide released into the apoplast) perceived by MIK2 in a BAK1/SERK3 and SERK4 coreceptors-dependent manner, that modulates various physiological and antimicrobial processes including growth prevention and reactive oxygen species (ROS) response regulation. The protein is Secreted transmembrane peptide 5 of Arabidopsis thaliana (Mouse-ear cress).